Reading from the N-terminus, the 497-residue chain is Protein FAM114A2 (497 aa).

Residues 1 to 54 (MSDKDPPESPVVTGVASTLKDENCEPVEKPEDKSQPVVSTRKRPETKPSSDLEA) are disordered. Residues 19–34 (LKDENCEPVEKPEDKS) show a composition bias toward basic and acidic residues. Phosphoserine is present on residues serine 84 and serine 205. The disordered stretch occupies residues 344–364 (VAEKEEGEKESEAGNTEEAQK).

The protein belongs to the FAM114 family.

The chain is Protein FAM114A2 (Fam114a2) from Mus musculus (Mouse).